The sequence spans 513 residues: Maturase K (513 aa).

Belongs to the intron maturase 2 family. MatK subfamily.

The protein localises to the plastid. Its subcellular location is the chloroplast. In terms of biological role, usually encoded in the trnK tRNA gene intron. Probably assists in splicing its own and other chloroplast group II introns. This chain is Maturase K, found in Saccharum officinarum (Sugarcane).